We begin with the raw amino-acid sequence, 454 residues long: MSHNDTIVAQATPPGRGGVGILRISGLKARDVAQEVLGKLPKPRYADYLPFKDVDGSALDQGIALWFPGPNSFTGEDVLELQGHGGPVILDLLLKRILTLPGVRIARPGEFSERAFLNDKLDLAQAEAIADLIDASSEQAARSALNSLQGAFSARVNHLVEALTHLRIYVEAAIDFPDEEIDFLSDGKIEAQLNGVIADLDAVRTEARQGSLLREGMKVVIAGRPNAGKSSLLNALAGREAAIVTDIAGTTRDVLREHIHIDGMPLHIIDTAGLRDANDEVERIGIERAWQEIEQADRVLFMVDGTTTDAVDPADIWPDFIARLPKNLPITVVRNKADITGETLGISEVNGHSLVRLSARTGEGVDVLRNNLKQSMGFETNMEGGFLARRRHLQALAEAANHLEQGKAQLLGAWAGELLAEELRLAQQSLSEITGEFTSDDLLGRIFSSFCIGK.

(6S)-5-formyl-5,6,7,8-tetrahydrofolate is bound by residues Arg-23, Glu-80, and Lys-120. The region spanning Gly-216–Gly-377 is the TrmE-type G domain. Residue Asn-226 participates in K(+) binding. GTP-binding positions include Asn-226 to Ser-231, Thr-245 to Thr-251, Asp-270 to Gly-273, Asn-335 to Asp-338, and Ser-358 to Arg-360. Ser-230 provides a ligand contact to Mg(2+). 3 residues coordinate K(+): Thr-245, Ile-247, and Thr-250. Thr-251 contacts Mg(2+). Residue Lys-454 coordinates (6S)-5-formyl-5,6,7,8-tetrahydrofolate.

The protein belongs to the TRAFAC class TrmE-Era-EngA-EngB-Septin-like GTPase superfamily. TrmE GTPase family. Homodimer. Heterotetramer of two MnmE and two MnmG subunits. Requires K(+) as cofactor.

The protein resides in the cytoplasm. Exhibits a very high intrinsic GTPase hydrolysis rate. Involved in the addition of a carboxymethylaminomethyl (cmnm) group at the wobble position (U34) of certain tRNAs, forming tRNA-cmnm(5)s(2)U34. The protein is tRNA modification GTPase MnmE of Salmonella paratyphi A (strain AKU_12601).